An 838-amino-acid chain; its full sequence is Translation initiation factor IF-2 (838 aa).

A disordered region spans residues 50–108 (VQSGKKPESPEKKDIKQNTQKEAPETQTQQKPIEQEVETKQNIDSTPIKVEPKQESLAS). Over residues 54-65 (KKPESPEKKDIK) the composition is skewed to basic and acidic residues. The span at 66 to 81 (QNTQKEAPETQTQQKP) shows a compositional bias: polar residues. The 170-residue stretch at 337 to 506 (SRAPVVTIMG…LLQAELLELK (170 aa)) folds into the tr-type G domain. Positions 346 to 353 (GHVDHGKT) are G1. Residue 346 to 353 (GHVDHGKT) coordinates GTP. Residues 371–375 (GITQH) form a G2 region. Residues 392-395 (DTPG) form a G3 region. GTP is bound by residues 392 to 396 (DTPGH) and 446 to 449 (NKMD). The G4 stretch occupies residues 446–449 (NKMD). The interval 482–484 (SAK) is G5.

The protein belongs to the TRAFAC class translation factor GTPase superfamily. Classic translation factor GTPase family. IF-2 subfamily.

The protein localises to the cytoplasm. One of the essential components for the initiation of protein synthesis. Protects formylmethionyl-tRNA from spontaneous hydrolysis and promotes its binding to the 30S ribosomal subunits. Also involved in the hydrolysis of GTP during the formation of the 70S ribosomal complex. The sequence is that of Translation initiation factor IF-2 from Campylobacter fetus subsp. fetus (strain 82-40).